We begin with the raw amino-acid sequence, 284 residues long: Fructosamine kinase FrlD (284 aa).

It belongs to the carbohydrate kinase PfkB family.

Functionally, catalyzes the phosphorylation of a range of fructosamines to fructosamine 6-phosphates. The chain is Fructosamine kinase FrlD (frlD) from Bacillus subtilis (strain 168).